A 300-amino-acid chain; its full sequence is 4-hydroxy-tetrahydrodipicolinate synthase (300 aa).

Thr55 is a pyruvate binding site. The Proton donor/acceptor role is filled by Tyr143. Lys171 functions as the Schiff-base intermediate with substrate in the catalytic mechanism. A pyruvate-binding site is contributed by Ile211.

The protein belongs to the DapA family. Homotetramer; dimer of dimers.

It is found in the cytoplasm. The catalysed reaction is L-aspartate 4-semialdehyde + pyruvate = (2S,4S)-4-hydroxy-2,3,4,5-tetrahydrodipicolinate + H2O + H(+). Its pathway is amino-acid biosynthesis; L-lysine biosynthesis via DAP pathway; (S)-tetrahydrodipicolinate from L-aspartate: step 3/4. Functionally, catalyzes the condensation of (S)-aspartate-beta-semialdehyde [(S)-ASA] and pyruvate to 4-hydroxy-tetrahydrodipicolinate (HTPA). The polypeptide is 4-hydroxy-tetrahydrodipicolinate synthase (Mycobacterium leprae (strain Br4923)).